A 531-amino-acid polypeptide reads, in one-letter code: Cytochrome P450 monooxygenase ffsD (531 aa).

The helical transmembrane segment at 40-60 threads the bilayer; the sequence is VGALLGISLSVVLLLWVISVV. Cysteine 475 serves as a coordination point for heme.

Belongs to the cytochrome P450 family. It depends on heme as a cofactor.

The protein localises to the membrane. The protein operates within mycotoxin biosynthesis. Functionally, cytochrome P450 monooxygenase; part of the gene cluster that mediates the biosynthesis of the cytotoxic leucine-containing cytochalasans, including aspochalasin C, aspochalasin E, TMC-169, flavichalasine F, aspergillin PZ, aspochalasin M and flavichalasine G. The first step in the pathway is catalyzed by the hybrid PKS-NRPS ffsA that utilizes 8 units of malonyl-CoA to iteratively assemble the octaketide chain before addition of L-leucine by the C-terminal NRPS modules. Because ffsA lacks a designated enoylreductase (ER) domain, the required activity is provided the enoyl reductase fssC. The methyltransferase (MT) domain of ffsA catalyzes the alpha-methylation at C10 and C14 using S-adenosyl-L-methionine as the methyl-donating cosubstrate. Reduction by the hydrolyase ffsE, followed by dehydration and intra-molecular Diels-Alder cyclization by the Diels-Alderase ffsF then yield the required isoindolone-fused macrocycle. A number of oxidative steps catalyzed by the tailoring cytochrome P450 monooxygenase ffsD, the FAD-linked oxidoreductase ffsJ and the short-chain dehydrogenase/reductase ffsI, are further required to afford the final products. The chain is Cytochrome P450 monooxygenase ffsD from Aspergillus flavipes.